Reading from the N-terminus, the 566-residue chain is Type 3 secretion system secretin (566 aa).

Positions 1 to 22 (MKKFNIKSLTLLIVLLPLIVNA) are cleaved as a signal peptide.

The protein belongs to the bacterial secretin family. T3SS SctC subfamily. As to quaternary structure, the core secretion machinery of the T3SS is composed of approximately 20 different proteins, including cytoplasmic components, a base, an export apparatus and a needle. This subunit is part of the base, which anchors the injectisome in the bacterial cell envelope. Forms a stable homooligomeric complex.

It localises to the cell outer membrane. Its function is as follows. Component of the type III secretion system (T3SS), also called injectisome, which is used to inject bacterial effector proteins into eukaryotic host cells. Forms a ring-shaped multimeric structure with an apparent central pore in the outer membrane. This is Type 3 secretion system secretin from Shigella sonnei.